The chain runs to 130 residues: MATTQNYGTGRRKTASARVFLRPGKGDIVVNGKPLDAYFGRETSRMVVRQPLEVAQAGNRFDVFATTAGGGANGQAGAIRLGIARALVEYDETLRGSMRAAGFMTRDAREVERKKVGLRKARRATQFSKR.

Belongs to the universal ribosomal protein uS9 family.

The protein is Small ribosomal subunit protein uS9 of Thioalkalivibrio sulfidiphilus (strain HL-EbGR7).